We begin with the raw amino-acid sequence, 345 residues long: UDP-3-O-acylglucosamine N-acyltransferase (345 aa).

Catalysis depends on histidine 248, which acts as the Proton acceptor.

The protein belongs to the transferase hexapeptide repeat family. LpxD subfamily. Homotrimer.

The catalysed reaction is a UDP-3-O-[(3R)-3-hydroxyacyl]-alpha-D-glucosamine + a (3R)-hydroxyacyl-[ACP] = a UDP-2-N,3-O-bis[(3R)-3-hydroxyacyl]-alpha-D-glucosamine + holo-[ACP] + H(+). Its pathway is bacterial outer membrane biogenesis; LPS lipid A biosynthesis. In terms of biological role, catalyzes the N-acylation of UDP-3-O-acylglucosamine using 3-hydroxyacyl-ACP as the acyl donor. Is involved in the biosynthesis of lipid A, a phosphorylated glycolipid that anchors the lipopolysaccharide to the outer membrane of the cell. This Prochlorococcus marinus (strain SARG / CCMP1375 / SS120) protein is UDP-3-O-acylglucosamine N-acyltransferase.